Consider the following 834-residue polypeptide: DNA polymerase I, thermostable (834 aa).

In terms of domain architecture, 5'-3' exonuclease spans Arg-176–Gln-262. The segment at Glu-412–Gly-834 is polymerase.

The protein belongs to the DNA polymerase type-A family.

The catalysed reaction is DNA(n) + a 2'-deoxyribonucleoside 5'-triphosphate = DNA(n+1) + diphosphate. Its function is as follows. In addition to polymerase activity, this DNA polymerase exhibits 5'-3' exonuclease activity. The chain is DNA polymerase I, thermostable (polA) from Thermus thermophilus (strain ATCC 27634 / DSM 579 / HB8).